The following is a 144-amino-acid chain: Giant hemoglobins B chain (144 aa).

One can recognise a Globin domain in the interval 3–144 (VCGPLQRLKV…LNVITNGIQG (142 aa)). Residue His-96 participates in heme b binding.

This sequence belongs to the globin family. Part of giant hemoglobin C1, V1 and V2. This worm has three different extracellular Hbs: two dissolved in the vascular blood, V1 (CA. 3,500 kDa) and V2 (CA. 400 kDa), and one in the coelomic fluid, C1 (CA. 400 kDa). V1 consists of four heme-containing, globin chains (B-E) and four linker chains (L1-L4). V2 consists of six globin chains (A-F) and C1 consists of five globin chains (A-E).

The protein localises to the secreted. The protein resides in the extracellular space. This Riftia pachyptila (Vent tube worm) protein is Giant hemoglobins B chain.